Consider the following 244-residue polypeptide: Methylthioribulose-1-phosphate dehydratase (244 aa).

Cysteine 89 is a binding site for substrate. 2 residues coordinate Zn(2+): histidine 107 and histidine 109. Glutamate 130 acts as the Proton donor/acceptor in catalysis. Zn(2+) is bound at residue histidine 192.

The protein belongs to the aldolase class II family. MtnB subfamily. Zn(2+) serves as cofactor.

The protein localises to the cytoplasm. The enzyme catalyses 5-(methylsulfanyl)-D-ribulose 1-phosphate = 5-methylsulfanyl-2,3-dioxopentyl phosphate + H2O. It functions in the pathway amino-acid biosynthesis; L-methionine biosynthesis via salvage pathway; L-methionine from S-methyl-5-thio-alpha-D-ribose 1-phosphate: step 2/6. Catalyzes the dehydration of methylthioribulose-1-phosphate (MTRu-1-P) into 2,3-diketo-5-methylthiopentyl-1-phosphate (DK-MTP-1-P). This is Methylthioribulose-1-phosphate dehydratase from Saccharomyces cerevisiae (strain ATCC 204508 / S288c) (Baker's yeast).